A 285-amino-acid polypeptide reads, in one-letter code: HTH-type transcriptional regulator MurR (285 aa).

One can recognise an HTH rpiR-type domain in the interval 1-77; the sequence is MLYLTKISNA…MALIGEYSAS (77 aa). The segment at residues 37–56 is a DNA-binding region (H-T-H motif); sequence SRQMAKQLGISQSSIVKFAQ. The region spanning 128–268 is the SIS domain; that stretch reads IIDVISKAQF…FVGLVQLNDV (141 aa).

In terms of assembly, homotetramer.

The protein operates within amino-sugar metabolism; N-acetylmuramate degradation [regulation]. Its function is as follows. Represses the expression of the murPQ operon involved in the uptake and degradation of N-acetylmuramic acid (MurNAc). Binds to two adjacent inverted repeats within the operator region. MurNAc 6-phosphate, the substrate of MurQ, is the specific inducer that weakens binding of MurR to the operator. This chain is HTH-type transcriptional regulator MurR, found in Escherichia coli (strain B / BL21-DE3).